A 123-amino-acid chain; its full sequence is Large ribosomal subunit protein eL8 (123 aa).

This sequence belongs to the eukaryotic ribosomal protein eL8 family. As to quaternary structure, part of the 50S ribosomal subunit. Probably part of the RNase P complex.

Its subcellular location is the cytoplasm. Its function is as follows. Multifunctional RNA-binding protein that recognizes the K-turn motif in ribosomal RNA, the RNA component of RNase P, box H/ACA, box C/D and box C'/D' sRNAs. The sequence is that of Large ribosomal subunit protein eL8 from Methanosphaera stadtmanae (strain ATCC 43021 / DSM 3091 / JCM 11832 / MCB-3).